The sequence spans 232 residues: Ubiquinone biosynthesis O-methyltransferase (232 aa).

Positions 36, 55, 76, and 120 each coordinate S-adenosyl-L-methionine.

Belongs to the methyltransferase superfamily. UbiG/COQ3 family.

The catalysed reaction is a 3-demethylubiquinol + S-adenosyl-L-methionine = a ubiquinol + S-adenosyl-L-homocysteine + H(+). It carries out the reaction a 3-(all-trans-polyprenyl)benzene-1,2-diol + S-adenosyl-L-methionine = a 2-methoxy-6-(all-trans-polyprenyl)phenol + S-adenosyl-L-homocysteine + H(+). Its pathway is cofactor biosynthesis; ubiquinone biosynthesis. Its function is as follows. O-methyltransferase that catalyzes the 2 O-methylation steps in the ubiquinone biosynthetic pathway. This Burkholderia multivorans (strain ATCC 17616 / 249) protein is Ubiquinone biosynthesis O-methyltransferase.